The chain runs to 362 residues: Aminomethyltransferase (362 aa).

This sequence belongs to the GcvT family. In terms of assembly, the glycine cleavage system is composed of four proteins: P, T, L and H.

The enzyme catalyses N(6)-[(R)-S(8)-aminomethyldihydrolipoyl]-L-lysyl-[protein] + (6S)-5,6,7,8-tetrahydrofolate = N(6)-[(R)-dihydrolipoyl]-L-lysyl-[protein] + (6R)-5,10-methylene-5,6,7,8-tetrahydrofolate + NH4(+). In terms of biological role, the glycine cleavage system catalyzes the degradation of glycine. This chain is Aminomethyltransferase, found in Listeria welshimeri serovar 6b (strain ATCC 35897 / DSM 20650 / CCUG 15529 / CIP 8149 / NCTC 11857 / SLCC 5334 / V8).